Here is a 2059-residue protein sequence, read N- to C-terminus: DNA polymerase theta (2059 aa).

Residues 25–45 (DKENAQPGNGNIQVQSAGNEV) form a disordered region. The segment covering 30 to 45 (QPGNGNIQVQSAGNEV) has biased composition (polar residues). The Helicase ATP-binding domain maps to 243-416 (PRLLFEHCNL…WLDAELYITN (174 aa)). 256–263 (APTSAGKT) serves as a coordination point for ATP. Positions 357–360 (DEVH) match the DEAH box motif. Positions 464-666 (CIETLLEGCS…HLKRALLEVI (203 aa)) constitute a Helicase C-terminal domain. 4 disordered regions span residues 1052–1073 (PPVK…KNPR), 1168–1190 (PQLA…VNEG), 1204–1274 (QRTQ…SRKV), and 1330–1372 (PHAS…GVSS). Positions 1062 to 1071 (ENGTANSQKN) are enriched in polar residues. The segment covering 1213-1274 (KDQPIQASRS…NANRTASRKV (62 aa)) has biased composition (polar residues). The span at 1355–1365 (REIEIDLESKN) shows a compositional bias: basic and acidic residues.

The protein belongs to the DNA polymerase type-A family. The cofactor is Mg(2+). In adult males, cleaved to produce a 100 kDa form. Expressed in ovaries (at protein level).

It localises to the nucleus. It catalyses the reaction DNA(n) + a 2'-deoxyribonucleoside 5'-triphosphate = DNA(n+1) + diphosphate. Its activity is regulated as follows. Resistant to aphidicolin, but sensitive to dideoxythymindine triphosphate (ddTTP) and N-ethyl malemide (NEM). In terms of biological role, multifunctional protein with both DNA polymerase and ATPase activities. Might have 3' to 5' exonuclease activity. Plays a role in different DNA repair pathways such as DNA strand cross-link repair and microhomology-mediated end-joining (MMEJ), an alternative non-homologous end-joining (NHEJ) machinery triggered in response to double-strand breaks. MMEJ is an error-prone repair pathway that produces deletions of sequences from the strand being repaired and promotes genomic rearrangements, such as telomere fusions. Utilizes short microhomologies present in partially and fully single-stranded DNA (ssDNA) as primers for DNA synthesis. Prefers poly(dA)/oligo(dT) as a template-primer. The ATPase activity is necessary during interstrand cross-link (ICL) repair and has a critical role in generating templated insertions during MMEJ. Necessary for processing DNA damage induced by oxygen and N-ethylation. In follicle cells, contributes to double-strand break repair at physiological rereplication forks necessary for survival of fertilized eggs. In Drosophila melanogaster (Fruit fly), this protein is DNA polymerase theta.